We begin with the raw amino-acid sequence, 149 residues long: D-aminoacyl-tRNA deacylase (149 aa).

The Gly-cisPro motif, important for rejection of L-amino acids signature appears at 137–138 (GP).

Belongs to the DTD family. In terms of assembly, homodimer.

It is found in the cytoplasm. It catalyses the reaction glycyl-tRNA(Ala) + H2O = tRNA(Ala) + glycine + H(+). It carries out the reaction a D-aminoacyl-tRNA + H2O = a tRNA + a D-alpha-amino acid + H(+). In terms of biological role, an aminoacyl-tRNA editing enzyme that deacylates mischarged D-aminoacyl-tRNAs. Also deacylates mischarged glycyl-tRNA(Ala), protecting cells against glycine mischarging by AlaRS. Acts via tRNA-based rather than protein-based catalysis; rejects L-amino acids rather than detecting D-amino acids in the active site. By recycling D-aminoacyl-tRNA to D-amino acids and free tRNA molecules, this enzyme counteracts the toxicity associated with the formation of D-aminoacyl-tRNA entities in vivo and helps enforce protein L-homochirality. This is D-aminoacyl-tRNA deacylase from Syntrophomonas wolfei subsp. wolfei (strain DSM 2245B / Goettingen).